A 200-amino-acid polypeptide reads, in one-letter code: MNLKTVTGAAVELSDTAFGREFNEALVHQVVTAYLAGARQGTRAQKTRAEVSGGGKKPWRQKGTGRARAGSTRSPIWVGGGRAFAAKPQDWSQKVNRKMYRGAMQCILAELVRQDRLILVDSITVSAPKTKELISKLAELNAPRALIVTNEVDENLYLAARNIPHVNVLGTNEVDPVSLIAFDKVIMSVDAAKQFEEALA.

Residues 44-71 are disordered; it reads AQKTRAEVSGGGKKPWRQKGTGRARAGS.

It belongs to the universal ribosomal protein uL4 family. In terms of assembly, part of the 50S ribosomal subunit.

In terms of biological role, one of the primary rRNA binding proteins, this protein initially binds near the 5'-end of the 23S rRNA. It is important during the early stages of 50S assembly. It makes multiple contacts with different domains of the 23S rRNA in the assembled 50S subunit and ribosome. Forms part of the polypeptide exit tunnel. This is Large ribosomal subunit protein uL4 from Psychrobacter sp. (strain PRwf-1).